The following is a 518-amino-acid chain: MSIAWSSVFKRELRLERFLPRVYSTKVPDNAPRAADNEQWLETLRPITHPEQKKSDHDVSYTRHINVPLGEVTSVNYLQRYNKHKHSQGNFVDVRIVKCKSGAGGSGAVSFFRDAGRSIGPPDGGDGGAGGSVYIQAVAGLGSLAKMKTTYTAEDGEAGAARQLDGMRGRDVLIQVPVGTVVKWCLPPQKVRELVEREMRKDNNATLRSILGSTAVNLSVSSGSHRKKIQLYRHEMAESWLFKDKAKEYHENKDWFKDLHKKMEAYDHSLEQSELFNDQFPLAGLDLNQPMTKPVCLLKGGQGGLGNMHFLTNLIRNPRFSKPGRNGLEQHFLFELKSIADLGLIGLPNAGKSTILNKISNAKPKIGHWQFTTLSPTIGTVSLGFGQDVFTVADIPGIIQGASLDKGMGLEFLRHIERSNGWVFVLDLSNKNPLNDLQLLIEEVGTLEKVKTKNILIVCNKVDIDAEKSESFAKYLQVEKFSKSQEWDCVPISALREENIDVLKKKMFKCARQSEFDK.

Residues 1–23 (MSIAWSSVFKRELRLERFLPRVY) constitute a mitochondrion transit peptide. The 251-residue stretch at 89-339 (GNFVDVRIVK…QHFLFELKSI (251 aa)) folds into the Obg domain. Residues 340–512 (ADLGLIGLPN…LKKKMFKCAR (173 aa)) form the OBG-type G domain. GTP-binding positions include 346–353 (GLPNAGKS), 394–398 (DIPGI), and 460–463 (NKVD).

Belongs to the TRAFAC class OBG-HflX-like GTPase superfamily. OBG GTPase family. As to quaternary structure, interacts with the mitochondrial 54S large ribosomal subunit.

The protein resides in the mitochondrion inner membrane. Its function is as follows. Required for mitochondrial protein synthesis. May be involved in mitochondrial ribosome biogenesis. The sequence is that of GTPase MTG2, mitochondrial (MTG2) from Saccharomyces cerevisiae (strain ATCC 204508 / S288c) (Baker's yeast).